The primary structure comprises 289 residues: 2,3-dimethylmalate lyase (289 aa).

Belongs to the isocitrate lyase/PEP mutase superfamily. In terms of assembly, homotetramer. It depends on Mg(2+) as a cofactor.

It carries out the reaction (2R,3S)-2,3-dimethylmalate = propanoate + pyruvate. Its pathway is cofactor degradation; nicotinate degradation; propanoate and pyruvate from 6-hydroxynicotinate: step 8/8. Its activity is regulated as follows. Completely inhibited by propionic anhydride and by cystamine. Irreversibly inhibited by the mercapto reagents iodoacetate and iodoacetamide. Unaffected by hydroxylamine. In terms of biological role, catalyzes the formation of proponate and pyruvate from (2R,3S)-2,3-dimethylmalate. Has no activity toward dimethylmaleate, malate, citramalate, isocitrate and citrate. The polypeptide is 2,3-dimethylmalate lyase (Eubacterium barkeri (Clostridium barkeri)).